Reading from the N-terminus, the 711-residue chain is Ribosomal RNA large subunit methyltransferase K/L (711 aa).

Residues 43 to 154 (TLYRTLLWSR…RENLVISLDL (112 aa)) form the THUMP domain.

This sequence belongs to the methyltransferase superfamily. RlmKL family.

The protein resides in the cytoplasm. The catalysed reaction is guanosine(2445) in 23S rRNA + S-adenosyl-L-methionine = N(2)-methylguanosine(2445) in 23S rRNA + S-adenosyl-L-homocysteine + H(+). It catalyses the reaction guanosine(2069) in 23S rRNA + S-adenosyl-L-methionine = N(2)-methylguanosine(2069) in 23S rRNA + S-adenosyl-L-homocysteine + H(+). In terms of biological role, specifically methylates the guanine in position 2445 (m2G2445) and the guanine in position 2069 (m7G2069) of 23S rRNA. The chain is Ribosomal RNA large subunit methyltransferase K/L from Haemophilus influenzae (strain 86-028NP).